The sequence spans 285 residues: Probable endonuclease 4 (285 aa).

Zn(2+) contacts are provided by His-69, His-109, Glu-145, Asp-179, His-182, His-216, Asp-229, His-231, and Glu-261.

Belongs to the AP endonuclease 2 family. The cofactor is Zn(2+).

It carries out the reaction Endonucleolytic cleavage to 5'-phosphooligonucleotide end-products.. In terms of biological role, endonuclease IV plays a role in DNA repair. It cleaves phosphodiester bonds at apurinic or apyrimidinic (AP) sites, generating a 3'-hydroxyl group and a 5'-terminal sugar phosphate. The chain is Probable endonuclease 4 from Escherichia coli O81 (strain ED1a).